Here is a 567-residue protein sequence, read N- to C-terminus: Geranylgeranyl transferase type-2 subunit alpha (567 aa).

PFTA repeat units lie at residues 44–78, 88–122, 124–158, 159–193, 207–241, and 363–397; these read LDES…QLEV, LVKA…RLPE, NWAR…QAAV, PPAE…QLHP, VLLK…RADP, and VLQS…ALDP. Phosphoserine is present on S98. 5 LRR repeats span residues 442–463, 464–486, 487–508, 509–530, and 534–555; these read EVRV…EQLL, LVTH…AALR, CLEV…TNLP, RLQE…QPLT, and RLTL…SEHL.

Belongs to the protein prenyltransferase subunit alpha family. In terms of assembly, heterotrimer composed of RABGGTA, RABGGTB and CHM; within this trimer, RABGGTA and RABGGTB form the catalytic component B, while CHM (component A) mediates peptide substrate binding. The Rab GGTase dimer (RGGT) interacts with CHM (component A) prior to Rab protein binding; the association is stabilized by geranylgeranyl pyrophosphate (GGpp). The CHM:RGGT:Rab complex is destabilized by GGpp. Interacts with non-phosphorylated form of RAB8A; phosphorylation of RAB8A at 'Thr-72' disrupts this interaction.

It catalyses the reaction geranylgeranyl diphosphate + L-cysteinyl-[protein] = S-geranylgeranyl-L-cysteinyl-[protein] + diphosphate. Its activity is regulated as follows. The enzymatic reaction requires the aid of a Rab escort protein (also called component A), such as CHM. In terms of biological role, catalyzes the transfer of a geranylgeranyl moiety from geranylgeranyl diphosphate to both cysteines of Rab proteins with the C-terminal sequence -XXCC, -XCXC and -CCXX, such as RAB1A, RAB3A, RAB5A and RAB7A. The protein is Geranylgeranyl transferase type-2 subunit alpha (RABGGTA) of Bos taurus (Bovine).